The following is a 595-amino-acid chain: UvrABC system protein C (595 aa).

Residues 14–91 (DSPGCYIHKD…IQENKPKYNI (78 aa)) form the GIY-YIG domain. Residues 196–231 (DKIVNELRDKMTKASELMEFERAAEYRDLIEGIGLL) form the UVR domain.

This sequence belongs to the UvrC family. As to quaternary structure, interacts with UvrB in an incision complex.

The protein resides in the cytoplasm. Its function is as follows. The UvrABC repair system catalyzes the recognition and processing of DNA lesions. UvrC both incises the 5' and 3' sides of the lesion. The N-terminal half is responsible for the 3' incision and the C-terminal half is responsible for the 5' incision. The protein is UvrABC system protein C of Streptococcus mutans serotype c (strain ATCC 700610 / UA159).